The following is a 161-amino-acid chain: Allophycocyanin beta chain (161 aa).

Asparagine 71 bears the N4-methylasparagine mark. Cysteine 81 provides a ligand contact to (2R,3E)-phycocyanobilin.

Belongs to the phycobiliprotein family. In terms of assembly, heterodimer of an alpha and a beta chain. Contains one covalently linked phycocyanobilin chromophore.

The protein localises to the plastid. Its subcellular location is the chloroplast thylakoid membrane. Light-harvesting photosynthetic bile pigment-protein from the phycobiliprotein complex. Allophycocyanin has a maximum absorption at approximately 650 nanometers. This chain is Allophycocyanin beta chain (apcB), found in Porphyra purpurea (Red seaweed).